Reading from the N-terminus, the 358-residue chain is Alpha-ketoglutarate-dependent L-arginine hydroxylase (358 aa).

Residues 1–21 form a disordered region; the sequence is MTESPTTHHGAAPPDSVATPV. A helical transmembrane segment spans residues 117-135; sequence LSFLLMLYAGLLGDVFGWA. Position 156–158 (156–158) interacts with L-arginine; the sequence is LVS. Histidine 168 and glutamate 170 together coordinate Fe cation. Threonine 194 lines the 2-oxoglutarate pocket. 268–270 contributes to the L-arginine binding site; that stretch reads DGD. Histidine 316 serves as a coordination point for Fe cation. 2-oxoglutarate contacts are provided by arginine 330 and arginine 334. Arginine 334 is an L-arginine binding site.

The protein belongs to the clavaminate synthase family. Fe cation serves as cofactor.

The protein localises to the membrane. The enzyme catalyses L-arginine + 2-oxoglutarate + O2 = (2S,3S)-hydroxyarginine + succinate + CO2. The protein operates within antibiotic biosynthesis. In terms of biological role, involved in the biosynthesis of capreomycidine, an unusual amino acid used by non-ribosomal peptide synthases (NRPS) to make the tuberactinomycin class of peptide antibiotics such as viomycin and capreomycin. Catalyzes the stereospecific hydroxylation of the C3 of (2S)-arginine to generate (3S)-hydroxy-(2S)-arginine. Usually clavaminic acid synthase-like oxygenases catalyze the formation of threo diastereomers, however VioC produces the erythro diastereomer of beta-carbon-hydroxylated L-arginine. It exerts a broad substrate specificity by accepting the analogs L-homoarginine and L-canavanine for the beta-carbon hydroxylation. The sequence is that of Alpha-ketoglutarate-dependent L-arginine hydroxylase (vioC) from Streptomyces vinaceus.